The sequence spans 642 residues: Medium-chain-fatty-acid--[acyl-carrier-protein] ligase TtuA (642 aa).

This sequence belongs to the ATP-dependent AMP-binding enzyme family.

It catalyses the reaction a medium-chain fatty acid + holo-[ACP] + ATP = a medium-chain fatty acyl-[ACP] + AMP + diphosphate. The enzyme catalyses a medium-chain fatty acid + ATP + H(+) = a medium-chain fatty acyl-AMP + diphosphate. The catalysed reaction is a medium-chain fatty acyl-AMP + holo-[ACP] = a medium-chain fatty acyl-[ACP] + AMP + H(+). It carries out the reaction decanoate + holo-[ACP] + ATP = decanoyl-[ACP] + AMP + diphosphate. It catalyses the reaction decanoate + ATP + H(+) = decanoyl-AMP + diphosphate. The enzyme catalyses decanoyl-AMP + holo-[ACP] = decanoyl-[ACP] + AMP + H(+). Its function is as follows. Ligase likely involved in the biosynthesis of a polyyne metabolite. Catalyzes the activation of decanoic acid, followed by the loading of the activated decanoic acid onto the acyl carrier protein TtuC. Decanoic acid is the preferred substrate, but it can also use 10-undecenoic acid and lauric acid. Nonanoic acid and 7-octenoic acid are only weakly activated. The protein is Medium-chain-fatty-acid--[acyl-carrier-protein] ligase TtuA of Teredinibacter turnerae (strain ATCC 39867 / T7901).